Here is a 347-residue protein sequence, read N- to C-terminus: Transcription factor JunD (347 aa).

The disordered stretch occupies residues 1–43 (METPFYGDEALSGLGGGASGSGGSFASPGRLFPGAPPTAAAGS). Gly residues predominate over residues 13-23 (GLGGGASGSGG). Residues 27–39 (SPGRLFPGAPPTA) carry the Menin-binding motif (MBM) motif. The short motif at 46–55 (KKDALTLSLS) is the MAP kinase docking motif; essential for its phosphorylation element. The disordered stretch occupies residues 62-86 (LKPAAAPPPTPLRADGAPSAAPPDG). A compositionally biased stretch (low complexity) spans 73-86 (LRADGAPSAAPPDG). S90 carries the phosphoserine modification. S100 is modified (phosphoserine; by MAPK8). T117 is subject to Phosphothreonine. Residues 244 to 264 (QTVPDVPSFGESPPLSPIDMD) form a disordered region. A phosphoserine mark is found at S251, S255, and S259. Residues 268–295 (RIKAERKRLRNRIAASKCRKRKLERISR) form a basic motif region. The bZIP domain maps to 268-331 (RIKAERKRLR…AQLKQKVLSH (64 aa)). The tract at residues 296–324 (LEEKVKTLKSQNTELASTASLLREQVAQL) is leucine-zipper.

The protein belongs to the bZIP family. Jun subfamily. Heterodimer; binds DNA as a heterodimer. Component of an AP-1 transcription factor complex composed of JUN-FOS heterodimers. As part of the AP-1 transcription factor complex, forms heterodimers with FOS proteins, thereby binding to the AP-1 consensus sequence and stimulating transcription. Forms heterodimers with FOSB; thereby binding to the AP-1 consensus sequence. Interacts (via MBM motif) with MEN1; this interaction represses transcriptional activation. Interacts with MAPK10; this interaction is inhibited in the presence of MEN1. Phosphorylated by MAP kinases MAPK8 and MAPK10; phosphorylation is inhibited in the presence of MEN1.

The protein localises to the nucleus. Transcription factor binding AP-1 sites. Heterodimerizes with proteins of the FOS family to form an AP-1 transcription factor complex, thereby enhancing their DNA binding activity to an AP-1 consensus sequence 3'-TGA[GC]TCA-5' and enhancing their transcriptional activity. This chain is Transcription factor JunD (JUND), found in Homo sapiens (Human).